Reading from the N-terminus, the 413-residue chain is Serine/threonine transporter SstT (413 aa).

9 helical membrane passes run 22-42 (GLLL…VLGF), 61-81 (AVAP…KQLG), 89-109 (IVVL…LFSF), 148-168 (ALFN…GIAL), 189-209 (IVHF…AETL), 224-244 (LVVL…ILVF), 305-325 (MAGA…TLGI), 337-357 (VVAS…LLLI), and 363-383 (LFGI…VIGV).

It belongs to the dicarboxylate/amino acid:cation symporter (DAACS) (TC 2.A.23) family.

It localises to the cell inner membrane. It catalyses the reaction L-serine(in) + Na(+)(in) = L-serine(out) + Na(+)(out). The catalysed reaction is L-threonine(in) + Na(+)(in) = L-threonine(out) + Na(+)(out). Involved in the import of serine and threonine into the cell, with the concomitant import of sodium (symport system). This chain is Serine/threonine transporter SstT, found in Histophilus somni (strain 129Pt) (Haemophilus somnus).